The primary structure comprises 322 residues: Acetyl-coenzyme A carboxylase carboxyl transferase subunit alpha (322 aa).

Residues 32–293 enclose the CoA carboxyltransferase C-terminal domain; the sequence is DISEEIARLE…KRALQDALRQ (262 aa).

This sequence belongs to the AccA family. Acetyl-CoA carboxylase is a heterohexamer composed of biotin carboxyl carrier protein (AccB), biotin carboxylase (AccC) and two subunits each of ACCase subunit alpha (AccA) and ACCase subunit beta (AccD).

The protein resides in the cytoplasm. It carries out the reaction N(6)-carboxybiotinyl-L-lysyl-[protein] + acetyl-CoA = N(6)-biotinyl-L-lysyl-[protein] + malonyl-CoA. The protein operates within lipid metabolism; malonyl-CoA biosynthesis; malonyl-CoA from acetyl-CoA: step 1/1. Its function is as follows. Component of the acetyl coenzyme A carboxylase (ACC) complex. First, biotin carboxylase catalyzes the carboxylation of biotin on its carrier protein (BCCP) and then the CO(2) group is transferred by the carboxyltransferase to acetyl-CoA to form malonyl-CoA. In Aromatoleum aromaticum (strain DSM 19018 / LMG 30748 / EbN1) (Azoarcus sp. (strain EbN1)), this protein is Acetyl-coenzyme A carboxylase carboxyl transferase subunit alpha.